A 1065-amino-acid chain; its full sequence is Carbamoyl phosphate synthase large chain (1065 aa).

Residues 1-401 are carboxyphosphate synthetic domain; sequence MPKRRDIETI…SLLKAVRSLE (401 aa). Positions 129, 169, 175, 176, 208, 210, 215, 241, 242, 243, 284, and 298 each coordinate ATP. One can recognise an ATP-grasp 1 domain in the interval 133–327; it reads RALMNELGEP…IAKLAAKIAV (195 aa). Mg(2+) contacts are provided by Gln284, Glu298, and Asn300. Residues Gln284, Glu298, and Asn300 each contribute to the Mn(2+) site. Residues 402–546 form an oligomerization domain region; it reads IGVHHLELNE…YSTYEEENES (145 aa). The segment at 547 to 929 is carbamoyl phosphate synthetic domain; sequence IVTEKPSVIV…ALYKGLVASG (383 aa). Residues 671 to 861 form the ATP-grasp 2 domain; sequence EQALSELGIP…MANLATKAIL (191 aa). ATP-binding residues include Arg707, Arg746, Ile748, Glu752, Gly777, Val778, His779, Ser780, Gln820, and Glu832. Mg(2+)-binding residues include Gln820, Glu832, and Asn834. The Mn(2+) site is built by Gln820, Glu832, and Asn834. Residues 930–1065 form the MGS-like domain; that stretch reads IHIQPHGAVL…TAMTEGLVRS (136 aa). The segment at 930–1065 is allosteric domain; that stretch reads IHIQPHGAVL…TAMTEGLVRS (136 aa).

The protein belongs to the CarB family. As to quaternary structure, composed of two chains; the small (or glutamine) chain promotes the hydrolysis of glutamine to ammonia, which is used by the large (or ammonia) chain to synthesize carbamoyl phosphate. Tetramer of heterodimers (alpha,beta)4. It depends on Mg(2+) as a cofactor. Requires Mn(2+) as cofactor.

The enzyme catalyses hydrogencarbonate + L-glutamine + 2 ATP + H2O = carbamoyl phosphate + L-glutamate + 2 ADP + phosphate + 2 H(+). It carries out the reaction hydrogencarbonate + NH4(+) + 2 ATP = carbamoyl phosphate + 2 ADP + phosphate + 2 H(+). The protein operates within amino-acid biosynthesis; L-arginine biosynthesis; carbamoyl phosphate from bicarbonate: step 1/1. Its pathway is pyrimidine metabolism; UMP biosynthesis via de novo pathway; (S)-dihydroorotate from bicarbonate: step 1/3. Functionally, large subunit of the glutamine-dependent carbamoyl phosphate synthetase (CPSase). CPSase catalyzes the formation of carbamoyl phosphate from the ammonia moiety of glutamine, carbonate, and phosphate donated by ATP, constituting the first step of 2 biosynthetic pathways, one leading to arginine and/or urea and the other to pyrimidine nucleotides. The large subunit (synthetase) binds the substrates ammonia (free or transferred from glutamine from the small subunit), hydrogencarbonate and ATP and carries out an ATP-coupled ligase reaction, activating hydrogencarbonate by forming carboxy phosphate which reacts with ammonia to form carbamoyl phosphate. This is Carbamoyl phosphate synthase large chain from Bacillus caldolyticus.